A 352-amino-acid chain; its full sequence is Heavy metal-associated isoprenylated plant protein 36 (352 aa).

The HMA domain occupies 29–92; sequence YTTWVLRVSI…KIMKAGRHAE (64 aa). Residues cysteine 40 and cysteine 43 each contribute to the a metal cation site. Disordered stretches follow at residues 96 to 150, 162 to 211, and 229 to 252; these read TSME…GNFD, QLQP…GPPE, and PHLH…RHHP. Polar residues predominate over residues 97-107; it reads SMENNINNDCN. Residues 118–128 are compositionally biased toward acidic residues; that stretch reads ETSGDEDDDEN. Residues 133–148 are compositionally biased toward gly residues; that stretch reads NGGGDVGGGGGGGGGN. Residues 172–183 show a composition bias toward basic residues; the sequence is KKKKKKKKKKKS. Residues 192–203 show a composition bias toward gly residues; it reads EGGGGGGGGGGP. At cysteine 349 the chain carries Cysteine methyl ester. Cysteine 349 carries S-farnesyl cysteine lipidation. Positions 350–352 are cleaved as a propeptide — removed in mature form; that stretch reads CVM.

The protein belongs to the HIPP family.

Heavy-metal-binding protein. The chain is Heavy metal-associated isoprenylated plant protein 36 from Arabidopsis thaliana (Mouse-ear cress).